A 388-amino-acid polypeptide reads, in one-letter code: Succinate--CoA ligase [ADP-forming] subunit beta (388 aa).

The ATP-grasp domain occupies 9 to 244 (KSLFAEYGLP…PSQDDAREAH (236 aa)). ATP-binding positions include Lys-46, 53-55 (GRG), Glu-99, Thr-102, and Glu-107. Residues Asn-199 and Asp-213 each contribute to the Mg(2+) site. Residues Asn-264 and 321–323 (GIV) contribute to the substrate site.

This sequence belongs to the succinate/malate CoA ligase beta subunit family. As to quaternary structure, heterotetramer of two alpha and two beta subunits. Mg(2+) is required as a cofactor.

The enzyme catalyses succinate + ATP + CoA = succinyl-CoA + ADP + phosphate. The catalysed reaction is GTP + succinate + CoA = succinyl-CoA + GDP + phosphate. It participates in carbohydrate metabolism; tricarboxylic acid cycle; succinate from succinyl-CoA (ligase route): step 1/1. Functionally, succinyl-CoA synthetase functions in the citric acid cycle (TCA), coupling the hydrolysis of succinyl-CoA to the synthesis of either ATP or GTP and thus represents the only step of substrate-level phosphorylation in the TCA. The beta subunit provides nucleotide specificity of the enzyme and binds the substrate succinate, while the binding sites for coenzyme A and phosphate are found in the alpha subunit. In Shewanella frigidimarina (strain NCIMB 400), this protein is Succinate--CoA ligase [ADP-forming] subunit beta.